The following is an 814-amino-acid chain: Acyl-coenzyme A dehydrogenase (814 aa).

Glu-497 serves as the catalytic Proton acceptor.

Belongs to the acyl-CoA dehydrogenase family. FAD serves as cofactor.

It carries out the reaction a medium-chain 2,3-saturated fatty acyl-CoA + oxidized [electron-transfer flavoprotein] + H(+) = a medium-chain (2E)-enoyl-CoA + reduced [electron-transfer flavoprotein]. It catalyses the reaction a long-chain 2,3-saturated fatty acyl-CoA + oxidized [electron-transfer flavoprotein] + H(+) = a long-chain (2E)-enoyl-CoA + reduced [electron-transfer flavoprotein]. It participates in lipid metabolism; fatty acid beta-oxidation. Functionally, catalyzes the dehydrogenation of acyl-coenzymes A (acyl-CoAs) to 2-enoyl-CoAs, the first step of the beta-oxidation cycle of fatty acid degradation. Is required for the utilization of medium- and long-chain fatty acids as sole carbon sources for growth. Is needed for bacterial survival during carbone-source starvation. The chain is Acyl-coenzyme A dehydrogenase (fadE) from Salmonella typhi.